The following is a 296-amino-acid chain: Protease HtpX homolog (296 aa).

2 helical membrane passes run 7–27 and 29–49; these read TVLLLGVLTGLFLAIGHLVAG and QGMIIAFVVALFMNFFSYFFS. Zn(2+) is bound at residue His-131. Glu-132 is an active-site residue. Residue His-135 coordinates Zn(2+). A run of 2 helical transmembrane segments spans residues 141–161 and 178–198; these read ILISSIAATIGGAISMLANMA and IASIIGSIILFIVAPLAATLI. Glu-207 provides a ligand contact to Zn(2+).

Belongs to the peptidase M48B family. It depends on Zn(2+) as a cofactor.

Its subcellular location is the cell inner membrane. This Sulfurihydrogenibium sp. (strain YO3AOP1) protein is Protease HtpX homolog.